We begin with the raw amino-acid sequence, 203 residues long: Glycerol-3-phosphate acyltransferase (203 aa).

A run of 5 helical transmembrane segments spans residues 5–25 (IYIA…GLIL), 55–75 (LAAA…IVAA), 84–104 (IAAN…LFPV), 118–138 (IGVL…MWLA), and 159–179 (IFLW…LTLL).

This sequence belongs to the PlsY family. Probably interacts with PlsX.

The protein localises to the cell inner membrane. It catalyses the reaction an acyl phosphate + sn-glycerol 3-phosphate = a 1-acyl-sn-glycero-3-phosphate + phosphate. It participates in lipid metabolism; phospholipid metabolism. Its function is as follows. Catalyzes the transfer of an acyl group from acyl-phosphate (acyl-PO(4)) to glycerol-3-phosphate (G3P) to form lysophosphatidic acid (LPA). This enzyme utilizes acyl-phosphate as fatty acyl donor, but not acyl-CoA or acyl-ACP. The sequence is that of Glycerol-3-phosphate acyltransferase from Rhodopseudomonas palustris (strain ATCC BAA-98 / CGA009).